The following is a 68-amino-acid chain: Peptide Smp13 (68 aa).

The first 23 residues, methionine 1–alanine 23, serve as a signal peptide directing secretion. A Phenylalanine amide modification is found at phenylalanine 36. A propeptide spanning residues glycine 37–glutamine 68 is cleaved from the precursor.

It belongs to the non-disulfide-bridged peptide (NDBP) superfamily. Short antimicrobial peptide (group 4) family. In terms of tissue distribution, expressed by the venom gland.

Its subcellular location is the secreted. Its function is as follows. Peptide with unknown function. Does not show antimicrobial activity against the Gram-positive, and Gram-negative bacteria tested, as well as against the fungus C.albicans. In Scorpio palmatus (Israeli golden scorpion), this protein is Peptide Smp13.